A 370-amino-acid chain; its full sequence is Platelet-derived growth factor D (370 aa).

Positions 1-18 (MHRLIFVYTLICANFCSC) are cleaved as a signal peptide. Positions 52–170 (RDETIQVKGN…PGFKIYYSLL (119 aa)) constitute a CUB domain. Cys-109 and Cys-131 are disulfide-bonded. N-linked (GlcNAc...) asparagine glycosylation occurs at Asn-276. Cystine bridges form between Cys-302/Cys-360 and Cys-306/Cys-362.

This sequence belongs to the PDGF/VEGF growth factor family. In terms of assembly, homodimer; disulfide-linked. Interacts with PDGFRB homodimers, and with heterodimers formed by PDGFRA and PDGFRB. Post-translationally, activated by proteolytic cleavage. Proteolytic removal of the N-terminal CUB domain releasing the core domain is necessary for unmasking the receptor-binding epitopes of the core domain. Cleavage after Arg-247 or Arg-249 by urokinase plasminogen activator gives rise to the active form. Expressed at high levels in the heart, pancreas, adrenal gland and ovary and at low levels in placenta, liver, kidney, prostate, testis, small intestine, spleen and colon. In the kidney, expressed by the visceral epithelial cells of the glomeruli. A widespread expression is also seen in the medial smooth muscle cells of arteries and arterioles, as well as in smooth muscle cells of vasa rectae in the medullary area. Expressed in the adventitial connective tissue surrounding the suprarenal artery. In chronic obstructive nephropathy, a persistent expression is seen in glomerular visceral epithelial cells and vascular smooth muscle cells, as well as de novo expression by periglomerular interstitial cells and by some neointimal cells of atherosclerotic vessels. Expression in normal prostate is seen preferentially in the mesenchyme of the gland while expression is increased and more profuse in prostate carcinoma. Expressed in many ovarian, lung, renal and brain cancer-derived cell lines.

It localises to the secreted. Functionally, growth factor that plays an essential role in the regulation of embryonic development, cell proliferation, cell migration, survival and chemotaxis. Potent mitogen for cells of mesenchymal origin. Plays an important role in wound healing. Induces macrophage recruitment, increased interstitial pressure, and blood vessel maturation during angiogenesis. Can initiate events that lead to a mesangial proliferative glomerulonephritis, including influx of monocytes and macrophages and production of extracellular matrix. The chain is Platelet-derived growth factor D (PDGFD) from Homo sapiens (Human).